The following is a 163-amino-acid chain: Nucleotide-binding protein BCG9842_B4128 (163 aa).

This sequence belongs to the YajQ family.

Its function is as follows. Nucleotide-binding protein. The polypeptide is Nucleotide-binding protein BCG9842_B4128 (Bacillus cereus (strain G9842)).